A 507-amino-acid polypeptide reads, in one-letter code: Maturase K (507 aa).

This sequence belongs to the intron maturase 2 family. MatK subfamily.

It localises to the plastid. The protein resides in the chloroplast. Its function is as follows. Usually encoded in the trnK tRNA gene intron. Probably assists in splicing its own and other chloroplast group II introns. This is Maturase K from Araucaria heterophylla (Norfolk Island pine).